A 270-amino-acid chain; its full sequence is MFLVGSLVVLCGLLAQSTAQLAGLPLPLGQGLPLPLGQGLPLPLGQGLPLAVSPALPSNPTDLLAGNFANALSGGLLSGGLLGILENIPLLDVIKSGGGSSNGLVGGLLGKLTSSVPLLNNILDIKITDPRLLELGLVQSPDGHRLYATIPLSLKLQVNMPVVGSFLQLAVKLNITAEIVAMKDNQGRIHLVLGDCTHSPGSLQITLLNGVTPVQSSLDSLTGILTKVLPELIQGKVCPLINGILSGLDVTLVHNIAELLIHGIQFVIKV.

An N-terminal signal peptide occupies residues 1-19 (MFLVGSLVVLCGLLAQSTA). Residues 104–109 (LVGGLL) form an important for surfactant activity and antibacterial properties region. N174 carries an N-linked (GlcNAc...) asparagine glycan. A disulfide bridge links C196 with C238.

Belongs to the BPI/LBP/Plunc superfamily. Plunc family. Monomer. Interacts (via N-terminus) with SCNN1B, a subunit of the heterotrimeric epithelial sodium channel (ENaC); this inhibits proteolytic activation of ENaC. Detected in adult nasal epithelium, heart, lung, spleen, testis and salivary gland, and in embryonic nasal epithelium, lung, salivary gland and thymus.

The protein resides in the secreted. Lipid-binding protein which shows high specificity for the surfactant phospholipid dipalmitoylphosphatidylcholine (DPPC). Plays a role in the innate immune responses of the upper airways. Reduces the surface tension in secretions from airway epithelia and inhibits the formation of biofilm by pathogenic Gram-negative bacteria, such as P.aeruginosa and K.pneumoniae. Negatively regulates proteolytic cleavage of SCNN1G, an event that is required for activation of the epithelial sodium channel (ENaC), and thereby contributes to airway surface liquid homeostasis and proper clearance of mucus. Plays a role in the airway inflammatory response after exposure to irritants. May attract macrophages and neutrophils. The protein is BPI fold-containing family A member 1 (Bpifa1) of Rattus norvegicus (Rat).